The chain runs to 487 residues: 26S proteasome non-ATPase regulatory subunit 3 homolog B (487 aa).

The disordered stretch occupies residues 1 to 21 (MTQDVEMKDNQTPTQSVVSAP). A compositionally biased stretch (polar residues) spans 10–21 (NQTPTQSVVSAP). The region spanning 239-420 (CRYLFYLGKI…GCMVSKETGD (182 aa)) is the PCI domain. The disordered stretch occupies residues 452 to 487 (PPNTHREKESEEKRREMKQQEEELAKYMAEEDDDDF). A compositionally biased stretch (basic and acidic residues) spans 455–480 (THREKESEEKRREMKQQEEELAKYMA).

This sequence belongs to the proteasome subunit S3 family. As to quaternary structure, component of the 19S regulatory particle (RP/PA700) lid subcomplex of the 26S proteasome. The 26S proteasome is composed of a core protease (CP), known as the 20S proteasome, capped at one or both ends by the 19S regulatory particle (RP/PA700). The RP/PA700 complex is composed of at least 17 different subunits in two subcomplexes, the base and the lid, which form the portions proximal and distal to the 20S proteolytic core, respectively. Interacts with UCH1 and UCH2. In terms of tissue distribution, preferentially expressed in flowers.

In terms of biological role, acts as a regulatory subunit of the 26 proteasome which is involved in the ATP-dependent degradation of ubiquitinated proteins. This Arabidopsis thaliana (Mouse-ear cress) protein is 26S proteasome non-ATPase regulatory subunit 3 homolog B.